The sequence spans 136 residues: DNA-directed RNA polymerase subunit omega (136 aa).

The tract at residues glutamate 79 to alanine 107 is disordered. Residues serine 89–alanine 107 show a composition bias toward low complexity.

This sequence belongs to the RNA polymerase subunit omega family. In terms of assembly, the RNAP catalytic core consists of 2 alpha, 1 beta, 1 beta' and 1 omega subunit. When a sigma factor is associated with the core the holoenzyme is formed, which can initiate transcription.

The catalysed reaction is RNA(n) + a ribonucleoside 5'-triphosphate = RNA(n+1) + diphosphate. Its function is as follows. Promotes RNA polymerase assembly. Latches the N- and C-terminal regions of the beta' subunit thereby facilitating its interaction with the beta and alpha subunits. The polypeptide is DNA-directed RNA polymerase subunit omega (Methylobacterium radiotolerans (strain ATCC 27329 / DSM 1819 / JCM 2831 / NBRC 15690 / NCIMB 10815 / 0-1)).